A 416-amino-acid chain; its full sequence is Isobutyryl-CoA dehydrogenase, mitochondrial (416 aa).

The N-terminal 21 residues, 1–21 (MISGLFKLSNKQSVLQNATKL), are a transit peptide targeting the mitochondrion. FAD-binding positions include 156–165 (YCLTEPGSGS) and 189–191 (FIS). Position 165 (serine 165) interacts with substrate. Residue 273–276 (NGGR) coordinates substrate. FAD contacts are provided by residues arginine 301, 311–312 (FQ), and 370–374 (QLFGG). Glutamate 397 acts as the Proton acceptor in catalysis. Residue 399 to 401 (SDA) participates in FAD binding. Substrate is bound at residue arginine 409.

This sequence belongs to the acyl-CoA dehydrogenase family. In terms of assembly, homotetramer. The cofactor is FAD.

It is found in the mitochondrion. It catalyses the reaction 2-methylpropanoyl-CoA + oxidized [electron-transfer flavoprotein] + H(+) = 2-methylpropenoyl-CoA + reduced [electron-transfer flavoprotein]. It carries out the reaction (2S)-2-methylbutanoyl-CoA + oxidized [electron-transfer flavoprotein] + H(+) = (2E)-2-methylbut-2-enoyl-CoA + reduced [electron-transfer flavoprotein]. The catalysed reaction is propanoyl-CoA + oxidized [electron-transfer flavoprotein] + H(+) = acryloyl-CoA + reduced [electron-transfer flavoprotein]. Its pathway is amino-acid degradation; L-valine degradation. In terms of biological role, isobutyryl-CoA dehydrogenase which catalyzes one of the steps of the valine catabolic pathway. To a lesser extent, is also able to catalyze the oxidation of (2S)-2-methylbutanoyl-CoA. The sequence is that of Isobutyryl-CoA dehydrogenase, mitochondrial (acad8) from Dictyostelium discoideum (Social amoeba).